The sequence spans 152 residues: MRGGTVLLILILLLGVIARSPMTALAAASILALSYLGWGGLLEWIEQNGVDTGLIMLTLAMLAPFATGKVGLREVLLSFASLPGIIAVIGGVLATNLNKRGIDLLSGEPQIIVGMIVGSLLGIVLFGGIPVGPLMAGGLTALILQIYGWLSK.

5 helical membrane-spanning segments follow: residues 6 to 26 (VLLI…TALA), 52 to 72 (TGLI…KVGL), 75 to 95 (VLLS…VLAT), 111 to 131 (IIVG…GIPV), and 132 to 152 (GPLM…WLSK).

This sequence belongs to the UPF0756 family.

It is found in the cell membrane. This chain is UPF0756 membrane protein Helmi_09930, found in Heliobacterium modesticaldum (strain ATCC 51547 / Ice1).